Here is a 348-residue protein sequence, read N- to C-terminus: Holliday junction branch migration complex subunit RuvB (348 aa).

The tract at residues 4–198 is large ATPase domain (RuvB-L); it reads TTDYGASNTG…FGFTAHLDFY (195 aa). ATP contacts are provided by residues Leu37, Arg38, Gly79, Lys82, Thr83, Thr84, 145-147, Arg188, Tyr198, and Arg235; that span reads EDF. Mg(2+) is bound at residue Thr83. The interval 199 to 269 is small ATPAse domain (RuvB-S); it reads PHEELEKLIE…DVKEALALYQ (71 aa). Positions 272 to 348 are head domain (RuvB-H); the sequence is SEGLDRLDIA…DIIFGNYAQR (77 aa). The DNA site is built by Arg327 and Arg332.

This sequence belongs to the RuvB family. In terms of assembly, homohexamer. Forms an RuvA(8)-RuvB(12)-Holliday junction (HJ) complex. HJ DNA is sandwiched between 2 RuvA tetramers; dsDNA enters through RuvA and exits via RuvB. An RuvB hexamer assembles on each DNA strand where it exits the tetramer. Each RuvB hexamer is contacted by two RuvA subunits (via domain III) on 2 adjacent RuvB subunits; this complex drives branch migration. In the full resolvosome a probable DNA-RuvA(4)-RuvB(12)-RuvC(2) complex forms which resolves the HJ.

The protein localises to the cytoplasm. It catalyses the reaction ATP + H2O = ADP + phosphate + H(+). The RuvA-RuvB-RuvC complex processes Holliday junction (HJ) DNA during genetic recombination and DNA repair, while the RuvA-RuvB complex plays an important role in the rescue of blocked DNA replication forks via replication fork reversal (RFR). RuvA specifically binds to HJ cruciform DNA, conferring on it an open structure. The RuvB hexamer acts as an ATP-dependent pump, pulling dsDNA into and through the RuvAB complex. RuvB forms 2 homohexamers on either side of HJ DNA bound by 1 or 2 RuvA tetramers; 4 subunits per hexamer contact DNA at a time. Coordinated motions by a converter formed by DNA-disengaged RuvB subunits stimulates ATP hydrolysis and nucleotide exchange. Immobilization of the converter enables RuvB to convert the ATP-contained energy into a lever motion, pulling 2 nucleotides of DNA out of the RuvA tetramer per ATP hydrolyzed, thus driving DNA branch migration. The RuvB motors rotate together with the DNA substrate, which together with the progressing nucleotide cycle form the mechanistic basis for DNA recombination by continuous HJ branch migration. Branch migration allows RuvC to scan DNA until it finds its consensus sequence, where it cleaves and resolves cruciform DNA. In Bifidobacterium longum (strain DJO10A), this protein is Holliday junction branch migration complex subunit RuvB.